The chain runs to 94 residues: Small ribosomal subunit protein uS19 (94 aa).

The protein belongs to the universal ribosomal protein uS19 family.

Its function is as follows. Protein S19 forms a complex with S13 that binds strongly to the 16S ribosomal RNA. The chain is Small ribosomal subunit protein uS19 from Wolbachia pipientis wMel.